A 177-amino-acid chain; its full sequence is UPF0340 protein STH78 (177 aa).

It belongs to the UPF0340 family.

This chain is UPF0340 protein STH78, found in Symbiobacterium thermophilum (strain DSM 24528 / JCM 14929 / IAM 14863 / T).